The sequence spans 660 residues: Junctophilin-1 (660 aa).

Over 1 to 638 (MTGGRFDFDD…EKEANSGPNS (638 aa)) the chain is Cytoplasmic. MORN repeat units lie at residues 14–36 (YCGGWEEGKAHGHGICTGPKGQG), 38–59 (YSGSWSHGFEVVGVYTWPSGNT), 60–82 (YQGYWAQGKRHGLGVETKGKWMY), 106–128 (YEGTWSNGLQDGYGVETYGDGGT), and 129–151 (YQGQWAGGMRHGYGVRQSVPYGM). Phosphoserine is present on residues Ser-157, Ser-216, and Ser-220. Residues 228 to 247 (SKSSISSKRSSVRSDAAMSR) form a disordered region. MORN repeat units follow at residues 281–303 (YMGEWKNDKRNGFGISERSNGMK) and 304–326 (YEGEWANNKRHGYGCTVFPDGSK). Basic and acidic residues predominate over residues 437–454 (NPEEKVLEKPPSPKESPH). The segment at 437 to 631 (NPEEKVLEKP…NDTCPSLEKE (195 aa)) is disordered. At Ser-452 the chain carries Phosphoserine. Residue Thr-461 is modified to Phosphothreonine. A phosphoserine mark is found at Ser-465, Ser-469, and Ser-475. Residues 466–477 (PESSPKQSHSPQ) show a composition bias toward low complexity. Basic and acidic residues-rich tracts occupy residues 562 to 571 (PPEDREDDRG) and 598 to 612 (VAKESKTEPKAKKSE). Residues 639–659 (IMIVLVMLLNIGLAILFVHFL) form a helical; Anchor for type IV membrane protein membrane-spanning segment.

Belongs to the junctophilin family. As to expression, specifically expressed in skeletal muscle. Weakly expressed in embryos and neonates. Abundant in young adult muscles.

It is found in the cell membrane. The protein resides in the endoplasmic reticulum membrane. Its subcellular location is the sarcoplasmic reticulum membrane. In terms of biological role, junctophilins contribute to the formation of junctional membrane complexes (JMCs) which link the plasma membrane with the endoplasmic or sarcoplasmic reticulum in excitable cells. Provides a structural foundation for functional cross-talk between the cell surface and intracellular calcium release channels. JPH1 contributes to the construction of the skeletal muscle triad by linking the t-tubule (transverse-tubule) and SR (sarcoplasmic reticulum) membranes. This Mus musculus (Mouse) protein is Junctophilin-1 (Jph1).